The primary structure comprises 1059 residues: Protein OPAQUE10 (1059 aa).

7 consecutive repeat copies span residues 269 to 342 (SLLE…KESC), 343 to 416 (SLLE…KESC), 417 to 490 (SPLE…KESC), 491 to 564 (SPLE…KESC), 565 to 638 (FPLE…KESC), 639 to 712 (SPLE…KESC), and 713 to 786 (SPLE…KESC). Residues 269–786 (SLLEPEDSVN…SRPIHDKESC (518 aa)) are 7 X approximate repeats. The segment at 511 to 534 (FNDAPNKESEGYGESGRGKHGEKS) is disordered. A compositionally biased stretch (basic and acidic residues) spans 515-534 (PNKESEGYGESGRGKHGEKS). Disordered stretches follow at residues 732–756 (QYSD…EEKS), 856–875 (ETLA…DTGT), and 889–998 (SVCS…SGKG). The segment covering 858–869 (LADHPKKEEAGL) has biased composition (basic and acidic residues). Composition is skewed to polar residues over residues 907–924 (DFSS…NTGG) and 945–958 (ASDS…PEAS). Over residues 984-994 (TRGRPEGDAPR) the composition is skewed to basic and acidic residues. Residues 1003–1023 (VAGGITLVGAVFFMFHLSAAL) traverse the membrane as a helical segment.

In terms of assembly, homodimer. Interacts (via N-terminus) with FL1 (via C-terminus), HIP, 19 kDa alpha-zein (AC P06677), 22 kDa alpha-zein (AC O48966), 16 kDa gamma-zein (AC P08031) and 50 kDa gamma-zein (AC C0P381). Expressed in kernels.

It localises to the endoplasmic reticulum membrane. Cereal endosperm protein required for the ring-shaped distribution of 22 kDa alpha- and 16 kDa gamma-zeins in protein bodies. In Zea mays (Maize), this protein is Protein OPAQUE10.